The primary structure comprises 418 residues: Pigment epithelium-derived factor (418 aa).

The N-terminal stretch at 1–19 (MQALVLLLCIGALLGHSSC) is a signal peptide. A Pyrrolidone carboxylic acid modification is found at Gln-20. The interval 20–39 (QNPASPPEEGSPDPDSTGAL) is disordered. Ser-24 and Ser-114 each carry phosphoserine; by CK2. Ser-227 is modified (phosphoserine; by PKA). Residue Asn-285 is glycosylated (N-linked (GlcNAc...) (complex) asparagine). The segment at 371-383 (TTPSPGLQPAHLT) is O-glycosylated at one site.

Belongs to the serpin family. As to quaternary structure, interacts with PNPLA2; this interaction stimulates the phospholipase A2 activity of PNPLA2. In terms of processing, the N-terminus is blocked. Extracellular phosphorylation enhances antiangiogenic activity. Post-translationally, N- and O-glycosylated. O-glycosylated with a core 1 or possibly core 8 glycan. Retinal pigment epithelial cells and blood plasma.

Its subcellular location is the secreted. It is found in the melanosome. Neurotrophic protein; induces extensive neuronal differentiation in retinoblastoma cells. Potent inhibitor of angiogenesis. As it does not undergo the S (stressed) to R (relaxed) conformational transition characteristic of active serpins, it exhibits no serine protease inhibitory activity. The polypeptide is Pigment epithelium-derived factor (SERPINF1) (Homo sapiens (Human)).